The chain runs to 258 residues: Ubiquinone/menaquinone biosynthesis C-methyltransferase UbiE (258 aa).

Residues T81, D102, and N130–A131 each bind S-adenosyl-L-methionine.

This sequence belongs to the class I-like SAM-binding methyltransferase superfamily. MenG/UbiE family.

It carries out the reaction a 2-demethylmenaquinol + S-adenosyl-L-methionine = a menaquinol + S-adenosyl-L-homocysteine + H(+). The enzyme catalyses a 2-methoxy-6-(all-trans-polyprenyl)benzene-1,4-diol + S-adenosyl-L-methionine = a 5-methoxy-2-methyl-3-(all-trans-polyprenyl)benzene-1,4-diol + S-adenosyl-L-homocysteine + H(+). It functions in the pathway quinol/quinone metabolism; menaquinone biosynthesis; menaquinol from 1,4-dihydroxy-2-naphthoate: step 2/2. It participates in cofactor biosynthesis; ubiquinone biosynthesis. Methyltransferase required for the conversion of demethylmenaquinol (DMKH2) to menaquinol (MKH2) and the conversion of 2-polyprenyl-6-methoxy-1,4-benzoquinol (DDMQH2) to 2-polyprenyl-3-methyl-6-methoxy-1,4-benzoquinol (DMQH2). The protein is Ubiquinone/menaquinone biosynthesis C-methyltransferase UbiE of Sinorhizobium fredii (strain NBRC 101917 / NGR234).